Consider the following 285-residue polypeptide: MVSTMMNEQQQGGMTHGYNVEALKNKPKSKPGKATDTCLEVSDLQLWYGQDKVLKGVDMEIPRGRITAFIGPSGCGKSTLLRCFNRMNDLIDNCRIEGHIRIDGEDIYDRRVDIPELRRRVGMVFQKPNPFPKSIYENVAYGLRLQGVRNRRVLDEVVERSLKRAALWDEVKDRLHENALGLSGGQQQRLVIARAVAVEPEVLLLDEPASALDPLATLKIEELMFELKEEYTIAIVTHNMQQAARVSDYTAFMYLGELVEFNDTDTLFTTPAKKQTEDYITGRYG.

In terms of domain architecture, ABC transporter spans 39–280 (LEVSDLQLWY…PAKKQTEDYI (242 aa)). 71–78 (GPSGCGKS) contributes to the ATP binding site.

It belongs to the ABC transporter superfamily. Phosphate importer (TC 3.A.1.7) family. As to quaternary structure, the complex is composed of two ATP-binding proteins (PstB), two transmembrane proteins (PstC and PstA) and a solute-binding protein (PstS).

It is found in the cell inner membrane. The catalysed reaction is phosphate(out) + ATP + H2O = ADP + 2 phosphate(in) + H(+). Part of the ABC transporter complex PstSACB involved in phosphate import. Responsible for energy coupling to the transport system. The chain is Phosphate import ATP-binding protein PstB from Alkalilimnicola ehrlichii (strain ATCC BAA-1101 / DSM 17681 / MLHE-1).